The sequence spans 297 residues: Transcription factor PCF8 (297 aa).

The disordered stretch occupies residues 1–22 (MEEVVGGGKERKRPRGALVGVG). Residues 46–104 (GKDRHSKVVTSRGLRDRRVRLSVPTAIAFYDIQDRLGVDQPSKAIEWLIRAAAAAIDAL) enclose the TCP domain. Disordered stretches follow at residues 116–136 (AASSPPPPAADDAEVSTSETS) and 273–297 (AAPAATTNGGERRLQLWDFKEERKT). Positions 282-297 (GERRLQLWDFKEERKT) are enriched in basic and acidic residues.

As to quaternary structure, forms homodimers and heterodimers.

Its subcellular location is the nucleus. Transcription activator. Binds the promoter core sequence 5'-GGNCC-3'. In Oryza sativa subsp. indica (Rice), this protein is Transcription factor PCF8 (PCF8).